Reading from the N-terminus, the 83-residue chain is MLRNVLALRQIAQRTISTTSRRHFENKVPEKQKLFQEDNGMPVHLKGGTSDALLYRATMLLTVGGTAYAIYMLAMAAFPKKQN.

The N-terminal 23 residues, 1–23 (MLRNVLALRQIAQRTISTTSRRH), are a transit peptide targeting the mitochondrion. The Mitochondrial matrix segment spans residues 24 to 48 (FENKVPEKQKLFQEDNGMPVHLKGG). K33 carries the post-translational modification N6-acetyllysine. Residues 49-77 (TSDALLYRATMLLTVGGTAYAIYMLAMAA) traverse the membrane as a helical segment. Residues 78 to 83 (FPKKQN) are Mitochondrial intermembrane-facing.

The protein belongs to the cytochrome c oxidase VIIa family. Component of the cytochrome c oxidase (complex IV, CIV), a multisubunit enzyme composed of 14 subunits. The complex is composed of a catalytic core of 3 subunits MT-CO1, MT-CO2 and MT-CO3, encoded in the mitochondrial DNA, and 11 supernumerary subunits COX4I, COX5A, COX5B, COX6A, COX6B, COX6C, COX7A, COX7B, COX7C, COX8 and NDUFA4, which are encoded in the nuclear genome. The complex exists as a monomer or a dimer and forms supercomplexes (SCs) in the inner mitochondrial membrane with NADH-ubiquinone oxidoreductase (complex I, CI) and ubiquinol-cytochrome c oxidoreductase (cytochrome b-c1 complex, complex III, CIII), resulting in different assemblies (supercomplex SCI(1)III(2)IV(1) and megacomplex MCI(2)III(2)IV(2)). Interacts with PET100.

It is found in the mitochondrion inner membrane. Its pathway is energy metabolism; oxidative phosphorylation. In terms of biological role, component of the cytochrome c oxidase, the last enzyme in the mitochondrial electron transport chain which drives oxidative phosphorylation. The respiratory chain contains 3 multisubunit complexes succinate dehydrogenase (complex II, CII), ubiquinol-cytochrome c oxidoreductase (cytochrome b-c1 complex, complex III, CIII) and cytochrome c oxidase (complex IV, CIV), that cooperate to transfer electrons derived from NADH and succinate to molecular oxygen, creating an electrochemical gradient over the inner membrane that drives transmembrane transport and the ATP synthase. Cytochrome c oxidase is the component of the respiratory chain that catalyzes the reduction of oxygen to water. Electrons originating from reduced cytochrome c in the intermembrane space (IMS) are transferred via the dinuclear copper A center (CU(A)) of subunit 2 and heme A of subunit 1 to the active site in subunit 1, a binuclear center (BNC) formed by heme A3 and copper B (CU(B)). The BNC reduces molecular oxygen to 2 water molecules using 4 electrons from cytochrome c in the IMS and 4 protons from the mitochondrial matrix. The chain is Cytochrome c oxidase subunit 7A2, mitochondrial (Cox7a2) from Rattus norvegicus (Rat).